A 325-amino-acid chain; its full sequence is ATP synthase gamma chain (325 aa).

It belongs to the ATPase gamma chain family. F-type ATPases have 2 components, CF(1) - the catalytic core - and CF(0) - the membrane proton channel. CF(1) has five subunits: alpha(3), beta(3), gamma(1), delta(1), epsilon(1). CF(0) has three main subunits: a, b and c.

It is found in the cell membrane. Its function is as follows. Produces ATP from ADP in the presence of a proton gradient across the membrane. The gamma chain is believed to be important in regulating ATPase activity and the flow of protons through the CF(0) complex. The sequence is that of ATP synthase gamma chain from Corynebacterium diphtheriae (strain ATCC 700971 / NCTC 13129 / Biotype gravis).